The primary structure comprises 267 residues: Shikimate dehydrogenase (NADP(+)) (267 aa).

Shikimate is bound by residues 14-16 and T61; that span reads SLS. Catalysis depends on K65, which acts as the Proton acceptor. Shikimate contacts are provided by N86 and D101. NADP(+)-binding positions include 126 to 130, 150 to 155, and L213; these read GAGGA and NRTHSK. Shikimate is bound at residue Y215. Residue G236 coordinates NADP(+).

It belongs to the shikimate dehydrogenase family. Homodimer.

It carries out the reaction shikimate + NADP(+) = 3-dehydroshikimate + NADPH + H(+). It participates in metabolic intermediate biosynthesis; chorismate biosynthesis; chorismate from D-erythrose 4-phosphate and phosphoenolpyruvate: step 4/7. Involved in the biosynthesis of the chorismate, which leads to the biosynthesis of aromatic amino acids. Catalyzes the reversible NADPH linked reduction of 3-dehydroshikimate (DHSA) to yield shikimate (SA). The sequence is that of Shikimate dehydrogenase (NADP(+)) from Vesicomyosocius okutanii subsp. Calyptogena okutanii (strain HA).